We begin with the raw amino-acid sequence, 214 residues long: tRNA (guanine-N(7)-)-methyltransferase (214 aa).

4 residues coordinate S-adenosyl-L-methionine: Glu-43, Glu-68, Asp-95, and Asp-117. The active site involves Asp-117. Substrate-binding positions include Lys-121, Asp-153, and 190–193; that span reads TEYE.

The protein belongs to the class I-like SAM-binding methyltransferase superfamily. TrmB family.

The catalysed reaction is guanosine(46) in tRNA + S-adenosyl-L-methionine = N(7)-methylguanosine(46) in tRNA + S-adenosyl-L-homocysteine. It participates in tRNA modification; N(7)-methylguanine-tRNA biosynthesis. Catalyzes the formation of N(7)-methylguanine at position 46 (m7G46) in tRNA. The protein is tRNA (guanine-N(7)-)-methyltransferase of Staphylococcus aureus (strain Mu3 / ATCC 700698).